The sequence spans 151 residues: Deoxyuridine 5'-triphosphate nucleotidohydrolase (151 aa).

Substrate-binding positions include 70–72 (RSG), Asn83, 87–89 (LID), and Met97.

Belongs to the dUTPase family. Mg(2+) is required as a cofactor.

The enzyme catalyses dUTP + H2O = dUMP + diphosphate + H(+). The protein operates within pyrimidine metabolism; dUMP biosynthesis; dUMP from dCTP (dUTP route): step 2/2. Functionally, this enzyme is involved in nucleotide metabolism: it produces dUMP, the immediate precursor of thymidine nucleotides and it decreases the intracellular concentration of dUTP so that uracil cannot be incorporated into DNA. The sequence is that of Deoxyuridine 5'-triphosphate nucleotidohydrolase from Salmonella enteritidis PT4 (strain P125109).